Here is a 396-residue protein sequence, read N- to C-terminus: Gap junction gamma-1 protein (396 aa).

Topologically, residues 1-22 (MSWSFLTRLLEEIHNHSTFVGK) are cytoplasmic. The chain crosses the membrane as a helical span at residues 23 to 45 (IWLTVLIVFRIVLTAVGGESIYY). Topologically, residues 46-75 (DEQSKFVCNTEQPGCENVCYDAFAPLSHVR) are extracellular. A helical membrane pass occupies residues 76–95 (FWVFQIILVATPSVMYLGYA). The Cytoplasmic segment spans residues 96 to 175 (IHKIAKMEHG…RRIREDGLMK (80 aa)). A disordered region spans residues 145–165 (ELESEKENKEQNQSKPKHDGR). Residues 147–156 (ESEKENKEQN) are compositionally biased toward basic and acidic residues. A helical membrane pass occupies residues 176–198 (IYVLQLLARTMFEVGFLIGQYFL). At 199–228 (YGFQVHPFYVCSRVPCPHKIDCFISRPTEK) the chain is on the extracellular side. The chain crosses the membrane as a helical span at residues 229–248 (TIFLLIMYGVTGLCLLLNIW). Over 249 to 396 (EMLHLGFGTI…SGDGKTSVWI (148 aa)) the chain is Cytoplasmic. The interval 357 to 396 (NHQNNPHGPREKKAKVGSKAGSNKSSASSKSGDGKTSVWI) is disordered. A compositionally biased stretch (low complexity) spans 373–396 (GSKAGSNKSSASSKSGDGKTSVWI).

This sequence belongs to the connexin family. Gamma-type subfamily. A connexon is composed of a hexamer of connexins. Interacts with CNST.

The protein localises to the cell membrane. Its subcellular location is the cell junction. The protein resides in the gap junction. Functionally, one gap junction consists of a cluster of closely packed pairs of transmembrane channels, the connexons, through which materials of low MW diffuse from one cell to a neighboring cell. The chain is Gap junction gamma-1 protein (GJC1) from Sus scrofa (Pig).